The primary structure comprises 393 residues: Large ribosomal subunit protein uL2m (393 aa).

Residues 1–43 (MLVLGSLRSALSCSSTASLISKRNPCYPYGILCRTLSQSVKLW) constitute a mitochondrion transit peptide. Residues 337–393 (AMNKCDHPHGGGRGKSKSNKLSMSPWGQLAKGYKTRRGKNQNRMKVKDRPRGKDARL) are disordered. Residues 369-380 (YKTRRGKNQNRM) are compositionally biased toward basic residues. Over residues 381 to 393 (KVKDRPRGKDARL) the composition is skewed to basic and acidic residues.

The protein belongs to the universal ribosomal protein uL2 family. As to quaternary structure, component of the mitochondrial large ribosomal subunit (mt-LSU). Mature yeast 74S mitochondrial ribosomes consist of a small (37S) and a large (54S) subunit. The 37S small subunit contains a 15S ribosomal RNA (15S mt-rRNA) and 34 different proteins. The 54S large subunit contains a 21S rRNA (21S mt-rRNA) and 46 different proteins. uL2m has a Na/K ligand binding site.

The protein localises to the mitochondrion. Its function is as follows. Component of the mitochondrial ribosome (mitoribosome), a dedicated translation machinery responsible for the synthesis of mitochondrial genome-encoded proteins, including at least some of the essential transmembrane subunits of the mitochondrial respiratory chain. The mitoribosomes are attached to the mitochondrial inner membrane and translation products are cotranslationally integrated into the membrane. The protein is Large ribosomal subunit protein uL2m (RML2) of Saccharomyces cerevisiae (strain ATCC 204508 / S288c) (Baker's yeast).